Consider the following 166-residue polypeptide: Small ribosomal subunit protein uS5 (166 aa).

Residues 12–75 (YIEKLVQVNR…EAARRNMIQV (64 aa)) form the S5 DRBM domain.

It belongs to the universal ribosomal protein uS5 family. As to quaternary structure, part of the 30S ribosomal subunit. Contacts proteins S4 and S8.

In terms of biological role, with S4 and S12 plays an important role in translational accuracy. Located at the back of the 30S subunit body where it stabilizes the conformation of the head with respect to the body. In Ectopseudomonas mendocina (strain ymp) (Pseudomonas mendocina), this protein is Small ribosomal subunit protein uS5.